The primary structure comprises 305 residues: GMP synthase [glutamine-hydrolyzing] subunit B (305 aa).

The GMPS ATP-PPase domain maps to 2-184 (VDANAFIDEA…LPLPEEISER (183 aa)). 29-35 (SGGVDSS) is an ATP binding site.

In terms of assembly, heterodimer composed of a glutamine amidotransferase subunit (A) and a GMP-binding subunit (B).

It catalyses the reaction XMP + L-glutamine + ATP + H2O = GMP + L-glutamate + AMP + diphosphate + 2 H(+). It functions in the pathway purine metabolism; GMP biosynthesis; GMP from XMP (L-Gln route): step 1/1. In terms of biological role, catalyzes the synthesis of GMP from XMP. The polypeptide is GMP synthase [glutamine-hydrolyzing] subunit B (Methanocella arvoryzae (strain DSM 22066 / NBRC 105507 / MRE50)).